A 31-amino-acid chain; its full sequence is Cyclotide cter-E (31 aa).

Positions 1–31 (GIPCAESCVWIPCTVTALLGCSCKDKVCYLD) form a cross-link, cyclopeptide (Gly-Asp). 3 cysteine pairs are disulfide-bonded: C4/C21, C8/C23, and C13/C28.

Contains 3 disulfide bonds. In terms of processing, this is a cyclic peptide.

Functionally, probably participates in a plant defense mechanism. The polypeptide is Cyclotide cter-E (Clitoria ternatea (Butterfly pea)).